The chain runs to 382 residues: MSAWVLPDHIADVLPSEARHIEELRRGLLDTARSYGYELVMPPLLEHLESLLTGTGEALDLQTFKLVDQLSGRSLGLRADTTQQVARIDAHLLNRQGVARLCYCGPVLHTRPDRPHATREPLQFGAEIYGHPGIEADIEAVLLSLECLRSAHAQEVSVDLADVRIVRSLLAGLPVGMHQLAQVHGALAAKDASELASLTRDFPSASREGLLALLQLYGDATVLNEAENLLKPFPGAREALSDLRAIAARMDGVRVTFDLADLRGYAYYSGARFAIYAQGASDALVRGGRYDEVGAVFGRNRPAAGFSLDVKQLVGVVSAPSLRAAIRAPWGDGGALSAAIATLRRQGETVVCVLPGHGSEVDEFHCDRELVLVDGNWVVKAI.

It belongs to the class-II aminoacyl-tRNA synthetase family. HisZ subfamily. Heteromultimer composed of HisG and HisZ subunits.

The protein resides in the cytoplasm. The protein operates within amino-acid biosynthesis; L-histidine biosynthesis; L-histidine from 5-phospho-alpha-D-ribose 1-diphosphate: step 1/9. Its function is as follows. Required for the first step of histidine biosynthesis. May allow the feedback regulation of ATP phosphoribosyltransferase activity by histidine. This is ATP phosphoribosyltransferase regulatory subunit from Acidovorax ebreus (strain TPSY) (Diaphorobacter sp. (strain TPSY)).